Reading from the N-terminus, the 345-residue chain is NADH-quinone oxidoreductase subunit H (345 aa).

The next 8 helical transmembrane spans lie at 13-33, 84-104, 115-135, 161-181, 190-210, 248-268, 278-298, and 309-329; these read VLII…LLFL, FMLA…VIPF, VAIL…IMGG, IGLI…SAIV, FFSW…ISAL, YIAI…GWLS, IWMV…KAIV, and LGWK…AFAA.

It belongs to the complex I subunit 1 family. In terms of assembly, NDH-1 is composed of 14 different subunits. Subunits NuoA, H, J, K, L, M, N constitute the membrane sector of the complex.

The protein localises to the cell inner membrane. It catalyses the reaction a quinone + NADH + 5 H(+)(in) = a quinol + NAD(+) + 4 H(+)(out). Functionally, NDH-1 shuttles electrons from NADH, via FMN and iron-sulfur (Fe-S) centers, to quinones in the respiratory chain. The immediate electron acceptor for the enzyme in this species is believed to be ubiquinone. Couples the redox reaction to proton translocation (for every two electrons transferred, four hydrogen ions are translocated across the cytoplasmic membrane), and thus conserves the redox energy in a proton gradient. This subunit may bind ubiquinone. The protein is NADH-quinone oxidoreductase subunit H of Dinoroseobacter shibae (strain DSM 16493 / NCIMB 14021 / DFL 12).